Here is a 174-residue protein sequence, read N- to C-terminus: Flavodoxin 1 (174 aa).

Positions 4-168 constitute a Flavodoxin-like domain; the sequence is IGIFYGSSSG…RLERWIAVLQ (165 aa). FMN is bound by residues 10 to 14 and 89 to 122; these read SSSGV and LFGA…ALVG.

Requires FMN as cofactor.

In terms of biological role, flavodoxins are low-potential electron donors to a number of redox enzymes. AvFld 1 is able to donate electrons to the assimilatory nitrate reductase of A.vinelandii to catalyze the reduction of nitrate to nitrite. The polypeptide is Flavodoxin 1 (Azotobacter vinelandii (strain DJ / ATCC BAA-1303)).